A 517-amino-acid chain; its full sequence is Superoxide-generating NADPH oxidase heavy chain subunit A (517 aa).

Topologically, residues Met-1–Lys-19 are cytoplasmic. The chain crosses the membrane as a helical span at residues Leu-20–His-40. Topologically, residues Tyr-41–Gln-62 are extracellular. Residues Arg-58–Val-201 form the Ferric oxidoreductase domain. Residues Leu-63–Leu-83 form a helical membrane-spanning segment. Over Arg-84 to Asn-97 the chain is Cytoplasmic. A helical transmembrane segment spans residues Ile-98–Ala-118. Heme-binding residues include His-101 and His-115. The Extracellular segment spans residues His-119–Lys-149. A helical transmembrane segment spans residues Tyr-150–Met-170. Topologically, residues Tyr-171–Glu-184 are cytoplasmic. Residues Gly-185 to Leu-205 form a helical membrane-spanning segment. The heme site is built by His-190 and His-203. Position 206 (His-206) is a topological domain, extracellular. Residues Ser-207–Val-227 traverse the membrane as a helical segment. Residues Glu-228–Phe-517 are Cytoplasmic-facing. Residues Arg-229 to Glu-349 enclose the FAD-binding FR-type domain. An FAD-binding site is contributed by His-283–Ser-289.

As to quaternary structure, composed of a heavy chain and a light chain. Requires FAD as cofactor.

It is found in the membrane. Its function is as follows. Critical component of the membrane-bound oxidase that generates superoxide. It is the terminal component of a respiratory chain that transfers single electrons from cytoplasmic NADPH across the plasma membrane to molecular oxygen on the exterior. This Dictyostelium discoideum (Social amoeba) protein is Superoxide-generating NADPH oxidase heavy chain subunit A (noxA).